Reading from the N-terminus, the 300-residue chain is Protoheme IX farnesyltransferase 1 (300 aa).

The next 9 helical transmembrane spans lie at 28–48 (VVAL…PTIL), 54–74 (VAGL…NHLI), 100–120 (ALLF…VFTN), 122–142 (LTAW…TAYL), 149–169 (NIVI…TAVT), 176–196 (ALLL…ALAI), 222–242 (CILL…LVGM), 243–263 (SGPL…YKAW), and 280–300 (FSIY…YLWA).

Belongs to the UbiA prenyltransferase family. Protoheme IX farnesyltransferase subfamily.

It localises to the cell inner membrane. The enzyme catalyses heme b + (2E,6E)-farnesyl diphosphate + H2O = Fe(II)-heme o + diphosphate. Its pathway is porphyrin-containing compound metabolism; heme O biosynthesis; heme O from protoheme: step 1/1. Its function is as follows. Converts heme B (protoheme IX) to heme O by substitution of the vinyl group on carbon 2 of heme B porphyrin ring with a hydroxyethyl farnesyl side group. This chain is Protoheme IX farnesyltransferase 1, found in Shewanella sp. (strain MR-4).